We begin with the raw amino-acid sequence, 383 residues long: Acetylornithine deacetylase (383 aa).

His80 is a Zn(2+) binding site. Asp82 is a catalytic residue. Asp112 is a binding site for Zn(2+). Glu144 is a catalytic residue. Residues Glu145, Glu169, and His355 each contribute to the Zn(2+) site.

It belongs to the peptidase M20A family. ArgE subfamily. As to quaternary structure, homodimer. Requires Zn(2+) as cofactor. Co(2+) is required as a cofactor. It depends on glutathione as a cofactor.

It is found in the cytoplasm. It carries out the reaction N(2)-acetyl-L-ornithine + H2O = L-ornithine + acetate. It participates in amino-acid biosynthesis; L-arginine biosynthesis; L-ornithine from N(2)-acetyl-L-ornithine (linear): step 1/1. In terms of biological role, catalyzes the hydrolysis of the amide bond of N(2)-acetylated L-amino acids. Cleaves the acetyl group from N-acetyl-L-ornithine to form L-ornithine, an intermediate in L-arginine biosynthesis pathway, and a branchpoint in the synthesis of polyamines. The polypeptide is Acetylornithine deacetylase (Salmonella typhi).